The chain runs to 152 residues: Methylglyoxal synthase (152 aa).

An MGS-like domain is found at Met1 to Lys152. Residues His19, Lys23, Thr45–Thr48, and Ser65–Gly66 each bind substrate. Asp71 (proton donor/acceptor) is an active-site residue. His98 is a substrate binding site.

Belongs to the methylglyoxal synthase family.

The enzyme catalyses dihydroxyacetone phosphate = methylglyoxal + phosphate. Functionally, catalyzes the formation of methylglyoxal from dihydroxyacetone phosphate. The polypeptide is Methylglyoxal synthase (Yersinia enterocolitica serotype O:8 / biotype 1B (strain NCTC 13174 / 8081)).